Here is a 1245-residue protein sequence, read N- to C-terminus: TAL effector protein Brg11 (1245 aa).

Disordered regions lie at residues 1 to 87 and 173 to 205; these read MRIG…LVPE and CPQA…PTFL. Pro residues predominate over residues 67 to 87; it reads PRRPLPVAPASAPPAPSLVPE. A Nuclear localization signal 1 motif is present at residues 185–191; the sequence is RSARARR. One copy of the Cryptic repeat -1 repeat lies at 286–320; sequence LTRAHIVDIARQRSGDLALQALLPVATALTAAPLR. Residues 321–354 form a Cryptic repeat 0 repeat; that stretch reads LSASQIATVAQYGERPAIQALYRLRRKLTRAPLH. Core repeat repeat units follow at residues 355–389, 390–424, 425–459, 460–494, 495–529, 530–564, 565–599, 600–634, 635–669, 670–704, 705–739, 740–774, 775–809, 810–844, 845–879, and 880–914; these read LTPQ…APYR, LSTE…APYV, LDTE…APYA, LSTE…APYA, LSTE…VPYA, LSTA…APYG, LSTA…APYA, LNTE…APYA, LSTE…APYG, LSTA…TPYD, and LNTA…APYA. One copy of the Cryptic repeat +1 repeat lies at 915–948; that stretch reads LSTAQVVAIACISGQQALEAIEAHMPTLRQASHS. The stretch at 949 to 982 is one Cryptic repeat +2 repeat; that stretch reads LSPERVAAIACIGGRSAVEAVRQGLPVKAIRRIR. 3 consecutive short sequence motifs (nuclear localization signal) follow at residues 980 to 983, 1108 to 1111, and 1145 to 1148; these read RIRR, HRKR, and RRKR. The segment at 1096 to 1138 is disordered; sequence SPGMAGQSACSPHRKRPAETAIAPRSIRRSPNNAGQPSEPWPD. Residues 1237–1245 form an activation domain region; it reads DWLLQILET.

This sequence belongs to the transcription activator-like effector (TALE) family. RipTAL/RTL subfamily.

The protein resides in the secreted. It localises to the host nucleus. In terms of biological role, exported into plant cells, where it is targeted to the nucleus and probably acts as a transcription factor. Binds DNA in a sequence-specific manner. May contribute to plant pathogenicity. This is TAL effector protein Brg11 from Ralstonia nicotianae (strain ATCC BAA-1114 / GMI1000) (Ralstonia solanacearum).